The following is a 626-amino-acid chain: (+)-3-carene synthase 1, chloroplastic (626 aa).

The transit peptide at 1-45 directs the protein to the chloroplast; it reads MSLISAVPLASSCVSKSLISSVREHKALRRAIATLQMSRPGKSVA. The Mg(2+) site is built by Asp377, Asp381, and Asp529. The short motif at 377–381 is the DDXXD motif element; sequence DDMYD.

It belongs to the terpene synthase family. Tpsd subfamily. Requires Mg(2+) as cofactor. The cofactor is Mn(2+).

It is found in the plastid. It localises to the chloroplast. The catalysed reaction is (2E)-geranyl diphosphate = (+)-car-3-ene + diphosphate. It carries out the reaction (2E)-geranyl diphosphate = terpinolene + diphosphate. The protein operates within terpene metabolism; oleoresin biosynthesis. It functions in the pathway secondary metabolite biosynthesis; terpenoid biosynthesis. In terms of biological role, monoterpene synthase (TPS) involved in the biosynthesis of monoterpene natural products included in conifer oleoresin secretions and volatile emissions; these compounds contribute to biotic and abiotic stress defense against herbivores and pathogens. Catalyzes the conversion of (2E)-geranyl diphosphate (GPP) to (+)-3-carene and, to a lower extent, to terpinolene. This Pinus banksiana (Jack pine) protein is (+)-3-carene synthase 1, chloroplastic.